Reading from the N-terminus, the 397-residue chain is CCA-adding enzyme (397 aa).

ATP contacts are provided by Gly-26 and Arg-29. Residues Gly-26 and Arg-29 each coordinate CTP. Mg(2+) is bound by residues Asp-39 and Asp-41. ATP is bound by residues Arg-110, Asp-153, Arg-156, Arg-159, and Arg-162. CTP-binding residues include Arg-110, Asp-153, Arg-156, Arg-159, and Arg-162.

Belongs to the tRNA nucleotidyltransferase/poly(A) polymerase family. Bacterial CCA-adding enzyme type 3 subfamily. Homodimer. The cofactor is Mg(2+).

It carries out the reaction a tRNA precursor + 2 CTP + ATP = a tRNA with a 3' CCA end + 3 diphosphate. It catalyses the reaction a tRNA with a 3' CCA end + 2 CTP + ATP = a tRNA with a 3' CCACCA end + 3 diphosphate. Its function is as follows. Catalyzes the addition and repair of the essential 3'-terminal CCA sequence in tRNAs without using a nucleic acid template. Adds these three nucleotides in the order of C, C, and A to the tRNA nucleotide-73, using CTP and ATP as substrates and producing inorganic pyrophosphate. tRNA 3'-terminal CCA addition is required both for tRNA processing and repair. Also involved in tRNA surveillance by mediating tandem CCA addition to generate a CCACCA at the 3' terminus of unstable tRNAs. While stable tRNAs receive only 3'-terminal CCA, unstable tRNAs are marked with CCACCA and rapidly degraded. The chain is CCA-adding enzyme from Bacillus cereus (strain ZK / E33L).